The chain runs to 270 residues: ATP synthase subunit a (270 aa).

5 helical membrane-spanning segments follow: residues 37-57, 98-118, 143-163, 217-237, and 239-259; these read NVHI…LWVF, IAPL…MDLV, DVNI…YYSI, VVFI…GALP, and AIFH…LTIV.

The protein belongs to the ATPase A chain family. In terms of assembly, F-type ATPases have 2 components, CF(1) - the catalytic core - and CF(0) - the membrane proton channel. CF(1) has five subunits: alpha(3), beta(3), gamma(1), delta(1), epsilon(1). CF(0) has three main subunits: a(1), b(2) and c(9-12). The alpha and beta chains form an alternating ring which encloses part of the gamma chain. CF(1) is attached to CF(0) by a central stalk formed by the gamma and epsilon chains, while a peripheral stalk is formed by the delta and b chains.

Its subcellular location is the cell inner membrane. Its function is as follows. Key component of the proton channel; it plays a direct role in the translocation of protons across the membrane. In Aliivibrio fischeri (strain ATCC 700601 / ES114) (Vibrio fischeri), this protein is ATP synthase subunit a.